Here is a 192-residue protein sequence, read N- to C-terminus: Ion-translocating oxidoreductase complex subunit A (192 aa).

Transmembrane regions (helical) follow at residues 5–25 (LLLLVGTVLVNNFVLVKFLGL), 39–59 (IGMSMATTFVLTLASILSYLV), 65–85 (LPFDLGYLRTMSFILVIAVVV), 102–122 (ALGIYLPLITTNCAVLGVALL), 134–154 (AIFGFGAAVGFSLVLILFSAM), and 171–191 (AIAMVTAGLMSLAFMGFTGLV).

The protein belongs to the NqrDE/RnfAE family. The complex is composed of six subunits: RnfA, RnfB, RnfC, RnfD, RnfE and RnfG.

The protein resides in the cell inner membrane. Its function is as follows. Part of a membrane-bound complex that couples electron transfer with translocation of ions across the membrane. This chain is Ion-translocating oxidoreductase complex subunit A, found in Shewanella piezotolerans (strain WP3 / JCM 13877).